A 332-amino-acid chain; its full sequence is Decaprenyl-phosphate phosphoribosyltransferase (332 aa).

Positions 1-12 are enriched in basic and acidic residues; it reads MSEHAAEHHRDT. Residues 1 to 36 are disordered; sequence MSEHAAEHHRDTQNFLTSEPHTTAIEDNKKRQPPKN. 2 helical membrane-spanning segments follow: residues 50–70 and 74–94; these read WVKN…AIFN and IIDV…IYLV. Lys-52 and Tyr-92 together coordinate 5-phospho-alpha-D-ribose 1-diphosphate. Mg(2+)-binding residues include Asn-95 and Asp-99. Lys-109 lines the 5-phospho-alpha-D-ribose 1-diphosphate pocket. A run of 2 helical transmembrane segments spans residues 114-134 and 146-166; these read IAAG…LIAL and VALA…CFGW. 5-phospho-alpha-D-ribose 1-diphosphate is bound by residues Lys-167 and Arg-184. 2 helical membrane passes run 169–189 and 190–210; these read MPVI…MAGG and VAAG…GSLF. Lys-215 lines the trans,octa-cis-decaprenyl phosphate pocket. The next 3 helical transmembrane spans lie at 244–264, 273–293, and 310–330; these read FVWT…GFDL, PWYQ…AAGV, and VLQV…YIMP.

It belongs to the UbiA prenyltransferase family. DPPR synthase subfamily. Mg(2+) serves as cofactor.

It is found in the cell inner membrane. The catalysed reaction is trans,octa-cis-decaprenyl phosphate + 5-phospho-alpha-D-ribose 1-diphosphate + H(+) = trans,octa-cis-decaprenylphospho-beta-D-ribofuranose 5-phosphate + diphosphate. It participates in cell wall biogenesis; cell wall polysaccharide biosynthesis. In terms of biological role, involved in the biosynthesis of decaprenylphosphoryl arabinose (DPA) a precursor for arabinan synthesis in mycobacterial cell wall biosynthesis. Catalyzes the transfer of a 5-phosphoribosyl residue from phosphoribose diphosphate (PRPP) to decaprenyl phosphate (DP) to form decaprenylphosphoryl-5-phosphoribose (DPPR). In Corynebacterium glutamicum (strain ATCC 13032 / DSM 20300 / JCM 1318 / BCRC 11384 / CCUG 27702 / LMG 3730 / NBRC 12168 / NCIMB 10025 / NRRL B-2784 / 534), this protein is Decaprenyl-phosphate phosphoribosyltransferase.